Reading from the N-terminus, the 206-residue chain is Small ribosomal subunit protein eS1 (206 aa).

It belongs to the eukaryotic ribosomal protein eS1 family.

This is Small ribosomal subunit protein eS1 from Methanocorpusculum labreanum (strain ATCC 43576 / DSM 4855 / Z).